The primary structure comprises 239 residues: 7-cyano-7-deazaguanine synthase (239 aa).

Residue 12-22 coordinates ATP; the sequence is FSGGQDSATCL. Positions 200, 215, 218, and 221 each coordinate Zn(2+).

The protein belongs to the QueC family. The cofactor is Zn(2+).

It catalyses the reaction 7-carboxy-7-deazaguanine + NH4(+) + ATP = 7-cyano-7-deazaguanine + ADP + phosphate + H2O + H(+). Its pathway is purine metabolism; 7-cyano-7-deazaguanine biosynthesis. In terms of biological role, catalyzes the ATP-dependent conversion of 7-carboxy-7-deazaguanine (CDG) to 7-cyano-7-deazaguanine (preQ(0)). This Hyphomonas neptunium (strain ATCC 15444) protein is 7-cyano-7-deazaguanine synthase.